Reading from the N-terminus, the 390-residue chain is 1-acyl-sn-glycerol-3-phosphate acyltransferase 2 (390 aa).

A helical transmembrane segment spans residues 2–22 (AMAAAVIVPLGILFFISGLVV). The HXXXXD motif motif lies at 91–96 (HRSDID). The next 2 helical transmembrane spans lie at 305 to 325 (LAVVVSWACLLTLGAMKFLHW) and 333 to 353 (KGIALSAFGLGIITLCMQILI). The interval 358-390 (SERSTPAKVAPAKPKDNHQSGPSSQTEVEEKQK) is disordered.

Belongs to the 1-acyl-sn-glycerol-3-phosphate acyltransferase family.

Its subcellular location is the endoplasmic reticulum membrane. The enzyme catalyses a 1-acyl-sn-glycero-3-phosphate + an acyl-CoA = a 1,2-diacyl-sn-glycero-3-phosphate + CoA. It functions in the pathway phospholipid metabolism; CDP-diacylglycerol biosynthesis; CDP-diacylglycerol from sn-glycerol 3-phosphate: step 2/3. In terms of biological role, converts lysophosphatidic acid (LPA) into phosphatidic acid by incorporating acyl moiety at the 2 position. This Brassica napus (Rape) protein is 1-acyl-sn-glycerol-3-phosphate acyltransferase 2 (LPAT2).